The primary structure comprises 220 residues: Redox-sensing transcriptional repressor Rex (220 aa).

Positions 16–55 form a DNA-binding region, H-T-H motif; the sequence is MYVQVLETLKREGSQVVSSELLARTCSVNPSQIRKDLAYF. 90–95 lines the NAD(+) pocket; that stretch reads GIGNLG.

It belongs to the transcriptional regulatory Rex family. As to quaternary structure, homodimer.

The protein localises to the cytoplasm. Modulates transcription in response to changes in cellular NADH/NAD(+) redox state. In Solidesulfovibrio magneticus (strain ATCC 700980 / DSM 13731 / RS-1) (Desulfovibrio magneticus), this protein is Redox-sensing transcriptional repressor Rex.